The sequence spans 503 residues: 2-isopropylmalate synthase (503 aa).

Mn(2+) contacts are provided by Asp1, His189, His191, and Asn225. A Pyruvate carboxyltransferase domain is found at 1-254; sequence DGEQALQASL…STNINHKEIY (254 aa). Residues 379 to 503 form a regulatory domain region; sequence SLKFFSVQSI…NKNLKNLKKQ (125 aa).

This sequence belongs to the alpha-IPM synthase/homocitrate synthase family. LeuA type 1 subfamily. As to quaternary structure, homodimer. It depends on Mn(2+) as a cofactor.

It is found in the cytoplasm. The catalysed reaction is 3-methyl-2-oxobutanoate + acetyl-CoA + H2O = (2S)-2-isopropylmalate + CoA + H(+). It participates in amino-acid biosynthesis; L-leucine biosynthesis; L-leucine from 3-methyl-2-oxobutanoate: step 1/4. Catalyzes the condensation of the acetyl group of acetyl-CoA with 3-methyl-2-oxobutanoate (2-ketoisovalerate) to form 3-carboxy-3-hydroxy-4-methylpentanoate (2-isopropylmalate). The protein is 2-isopropylmalate synthase of Buchnera aphidicola subsp. Uroleucon ambrosiae.